Here is a 143-residue protein sequence, read N- to C-terminus: D-aminoacyl-tRNA deacylase (143 aa).

The short motif at 135-136 (GP) is the Gly-cisPro motif, important for rejection of L-amino acids element.

This sequence belongs to the DTD family. In terms of assembly, homodimer.

It localises to the cytoplasm. The catalysed reaction is glycyl-tRNA(Ala) + H2O = tRNA(Ala) + glycine + H(+). It catalyses the reaction a D-aminoacyl-tRNA + H2O = a tRNA + a D-alpha-amino acid + H(+). An aminoacyl-tRNA editing enzyme that deacylates mischarged D-aminoacyl-tRNAs. Also deacylates mischarged glycyl-tRNA(Ala), protecting cells against glycine mischarging by AlaRS. Acts via tRNA-based rather than protein-based catalysis; rejects L-amino acids rather than detecting D-amino acids in the active site. By recycling D-aminoacyl-tRNA to D-amino acids and free tRNA molecules, this enzyme counteracts the toxicity associated with the formation of D-aminoacyl-tRNA entities in vivo and helps enforce protein L-homochirality. The protein is D-aminoacyl-tRNA deacylase of Mycolicibacterium smegmatis (strain ATCC 700084 / mc(2)155) (Mycobacterium smegmatis).